The sequence spans 101 residues: NAD(P)H-quinone oxidoreductase subunit 4L, chloroplastic (101 aa).

The next 3 membrane-spanning stretches (helical) occupy residues 2-22 (MTEH…YGLI), 32-52 (MCLE…SDLF), and 61-81 (IFSI…PAIV).

This sequence belongs to the complex I subunit 4L family. NDH is composed of at least 16 different subunits, 5 of which are encoded in the nucleus.

It localises to the plastid. Its subcellular location is the chloroplast thylakoid membrane. It carries out the reaction a plastoquinone + NADH + (n+1) H(+)(in) = a plastoquinol + NAD(+) + n H(+)(out). The catalysed reaction is a plastoquinone + NADPH + (n+1) H(+)(in) = a plastoquinol + NADP(+) + n H(+)(out). Its function is as follows. NDH shuttles electrons from NAD(P)H:plastoquinone, via FMN and iron-sulfur (Fe-S) centers, to quinones in the photosynthetic chain and possibly in a chloroplast respiratory chain. The immediate electron acceptor for the enzyme in this species is believed to be plastoquinone. Couples the redox reaction to proton translocation, and thus conserves the redox energy in a proton gradient. The protein is NAD(P)H-quinone oxidoreductase subunit 4L, chloroplastic of Liriodendron tulipifera (Tuliptree).